The primary structure comprises 554 residues: Guanine nucleotide-binding protein alpha-2 subunit (554 aa).

Disordered regions lie at residues 1-139 (MGLC…NNSN) and 157-183 (VNGNSTNSDKALSNQFDQSNNSETHSG). The N-myristoyl glycine moiety is linked to residue Gly2. Cys4 carries the S-palmitoyl cysteine lipid modification. Basic and acidic residues-rich tracts occupy residues 7 to 17 (KDSRESTHDGG) and 28 to 43 (ANRRNDVRKGAGDKKQ). Low complexity predominate over residues 52–66 (GSIVNAASNINNSSS). Over residues 67–85 (GKTKISTVSEDGTVSNGVG) the composition is skewed to polar residues. A compositionally biased stretch (low complexity) spans 91-139 (DNANNKNNGNNNNSNNNDNNNNNNNNIGNNINGNNNNDSENIHDSNNSN). The G-alpha domain occupies 228–554 (NALKVLLLGS…ENSLKDSGVL (327 aa)). A G1 motif region spans residues 231–244 (KVLLLGSGESGKST). GTP is bound by residues Glu239, Ser240, Gly241, Lys242, Ser243, Thr244, Asp351, Ile376, Thr382, Gly405, Asn471, Lys472, Asp474, and Ala526. A Mg(2+)-binding site is contributed by Ser243. The interval 374 to 382 (DVIRTRKKT) is G2 motif. Thr382 contributes to the Mg(2+) binding site. Residues 398–407 (LHFFDVGGQR) form a G3 motif region. The G4 motif stretch occupies residues 467 to 474 (VLFLNKID). The G5 motif stretch occupies residues 524 to 529 (TQATDT).

The protein belongs to the G-alpha family. G proteins are composed of 3 units; alpha, beta and gamma. The alpha chain contains the guanine nucleotide binding site. Requires Mg(2+) as cofactor.

Guanine nucleotide-binding proteins (G proteins) are involved as modulators or transducers in various transmembrane signaling systems. This protein may be involved in the determination of the cAMP level according to nutritional conditions, most probably as a regulator of adenylyl cyclase. The chain is Guanine nucleotide-binding protein alpha-2 subunit (GPA2) from Kluyveromyces lactis (strain ATCC 8585 / CBS 2359 / DSM 70799 / NBRC 1267 / NRRL Y-1140 / WM37) (Yeast).